The following is a 412-amino-acid chain: Protein BTN1 (412 aa).

The N-terminal stretch at 1–29 is a signal peptide; it reads MDRRKLIFGKFWLFGLLNNVLYVVILAAA. Transmembrane regions (helical) follow at residues 41–61, 70–90, 91–111, 131–151, 154–174, 234–254, 281–300, 307–329, and 334–356; these read LILL…PFFI, IWSL…GRLG, VCIV…ITFL, GAGL…KIPV, SLLL…LQVE, VLVV…YLIN, IYVA…RSSG, GLYL…SWYY, and VWVI…VNSF.

The protein belongs to the battenin family.

It is found in the vacuole membrane. In terms of biological role, involved in vacuolar transport and vacuole pH homeostasis. Also required for cytokinesis. This is Protein BTN1 (BTN1) from Eremothecium gossypii (strain ATCC 10895 / CBS 109.51 / FGSC 9923 / NRRL Y-1056) (Yeast).